A 483-amino-acid polypeptide reads, in one-letter code: Aspartyl/glutamyl-tRNA(Asn/Gln) amidotransferase subunit B (483 aa).

The protein belongs to the GatB/GatE family. GatB subfamily. Heterotrimer of A, B and C subunits.

The catalysed reaction is L-glutamyl-tRNA(Gln) + L-glutamine + ATP + H2O = L-glutaminyl-tRNA(Gln) + L-glutamate + ADP + phosphate + H(+). It carries out the reaction L-aspartyl-tRNA(Asn) + L-glutamine + ATP + H2O = L-asparaginyl-tRNA(Asn) + L-glutamate + ADP + phosphate + 2 H(+). Its function is as follows. Allows the formation of correctly charged Asn-tRNA(Asn) or Gln-tRNA(Gln) through the transamidation of misacylated Asp-tRNA(Asn) or Glu-tRNA(Gln) in organisms which lack either or both of asparaginyl-tRNA or glutaminyl-tRNA synthetases. The reaction takes place in the presence of glutamine and ATP through an activated phospho-Asp-tRNA(Asn) or phospho-Glu-tRNA(Gln). The polypeptide is Aspartyl/glutamyl-tRNA(Asn/Gln) amidotransferase subunit B (Rickettsia rickettsii (strain Sheila Smith)).